Reading from the N-terminus, the 469-residue chain is ATP-dependent protease ATPase subunit HslU (469 aa).

Residues isoleucine 24 and 66 to 71 contribute to the ATP site; that span reads GVGKTE. The interval 159–179 is disordered; it reads LFGSMNQPDEPAEEEVDQELK. 3 residues coordinate ATP: aspartate 282, glutamate 347, and arginine 419.

Belongs to the ClpX chaperone family. HslU subfamily. A double ring-shaped homohexamer of HslV is capped on each side by a ring-shaped HslU homohexamer. The assembly of the HslU/HslV complex is dependent on binding of ATP.

It localises to the cytoplasm. ATPase subunit of a proteasome-like degradation complex; this subunit has chaperone activity. The binding of ATP and its subsequent hydrolysis by HslU are essential for unfolding of protein substrates subsequently hydrolyzed by HslV. HslU recognizes the N-terminal part of its protein substrates and unfolds these before they are guided to HslV for hydrolysis. The chain is ATP-dependent protease ATPase subunit HslU from Listeria innocua serovar 6a (strain ATCC BAA-680 / CLIP 11262).